The sequence spans 150 residues: Large ribosomal subunit protein uL15 (150 aa).

The tract at residues 1-60 (MKLSDLRPNPGANKRRKRVGRGPGSGHGKTATRGHKGQKSRSGGLKDPRRFEGGRSTTLM) is disordered. Positions 30 to 39 (TATRGHKGQK) are enriched in basic residues. Residues 44-53 (GLKDPRRFEG) are compositionally biased toward basic and acidic residues.

This sequence belongs to the universal ribosomal protein uL15 family. Part of the 50S ribosomal subunit.

In terms of biological role, binds to the 23S rRNA. The chain is Large ribosomal subunit protein uL15 from Thermus thermophilus (strain ATCC BAA-163 / DSM 7039 / HB27).